The following is a 372-amino-acid chain: Cytochrome b (372 aa).

Transmembrane regions (helical) follow at residues 25–45 (FGSM…FLAI), 69–90 (WTMQ…YIHI), 105–125 (WLSG…GYVL), and 170–190 (FFAL…IHII). Positions 75 and 89 each coordinate heme b. Residues histidine 174 and histidine 188 each coordinate heme b. Residue histidine 193 participates in a ubiquinone binding. 4 consecutive transmembrane segments (helical) span residues 218 to 238 (YKDI…MAFA), 280 to 300 (LGGT…PFTH), 312 to 332 (LAQM…WTAT), and 339 to 358 (FILI…IINP).

The protein belongs to the cytochrome b family. The cytochrome bc1 complex contains 3 respiratory subunits (MT-CYB, CYC1 and UQCRFS1), 2 core proteins (UQCRC1 and UQCRC2) and probably 6 low-molecular weight proteins. Heme b is required as a cofactor.

The protein resides in the mitochondrion inner membrane. Component of the ubiquinol-cytochrome c reductase complex (complex III or cytochrome b-c1 complex) that is part of the mitochondrial respiratory chain. The b-c1 complex mediates electron transfer from ubiquinol to cytochrome c. Contributes to the generation of a proton gradient across the mitochondrial membrane that is then used for ATP synthesis. In Acanthophis antarcticus (Common death adder), this protein is Cytochrome b (MT-CYB).